A 275-amino-acid chain; its full sequence is 4-hydroxy-tetrahydrodipicolinate reductase (275 aa).

NAD(+) contacts are provided by residues 13 to 18 (GAAGKM) and 108 to 110 (GTT). His164 acts as the Proton donor/acceptor in catalysis. His165 contributes to the (S)-2,3,4,5-tetrahydrodipicolinate binding site. The active-site Proton donor is Lys168. 174 to 175 (GT) lines the (S)-2,3,4,5-tetrahydrodipicolinate pocket.

Belongs to the DapB family.

It is found in the cytoplasm. The catalysed reaction is (S)-2,3,4,5-tetrahydrodipicolinate + NAD(+) + H2O = (2S,4S)-4-hydroxy-2,3,4,5-tetrahydrodipicolinate + NADH + H(+). It catalyses the reaction (S)-2,3,4,5-tetrahydrodipicolinate + NADP(+) + H2O = (2S,4S)-4-hydroxy-2,3,4,5-tetrahydrodipicolinate + NADPH + H(+). The protein operates within amino-acid biosynthesis; L-lysine biosynthesis via DAP pathway; (S)-tetrahydrodipicolinate from L-aspartate: step 4/4. In terms of biological role, catalyzes the conversion of 4-hydroxy-tetrahydrodipicolinate (HTPA) to tetrahydrodipicolinate. This is 4-hydroxy-tetrahydrodipicolinate reductase from Cyanothece sp. (strain PCC 7425 / ATCC 29141).